A 209-amino-acid chain; its full sequence is Large ribosomal subunit protein uL3 (209 aa).

Residues 125–148 form a disordered region; it reads RHGQSRGPMAHGSRYHRRPGSMGP.

The protein belongs to the universal ribosomal protein uL3 family. As to quaternary structure, part of the 50S ribosomal subunit. Forms a cluster with proteins L14 and L19.

Its function is as follows. One of the primary rRNA binding proteins, it binds directly near the 3'-end of the 23S rRNA, where it nucleates assembly of the 50S subunit. The chain is Large ribosomal subunit protein uL3 from Lysinibacillus sphaericus (strain C3-41).